The chain runs to 717 residues: F-box only protein 42 (717 aa).

Positions 1–30 are enriched in acidic residues; the sequence is MASSSDSEDDSFMAVDQEETVLEGTMEQDE. The segment at 1–47 is disordered; sequence MASSSDSEDDSFMAVDQEETVLEGTMEQDEEPHPVLEAEETRHNRSM. The segment covering 31–43 has biased composition (basic and acidic residues); it reads EPHPVLEAEETRH. The F-box domain maps to 44-93; sequence NRSMSELPEEVLEYILSFLSPYQEHKTAALVCKQWYRLIKGVAHQCYHGF. 4 Kelch repeats span residues 132-184, 186-242, 244-293, and 295-342; these read SMYV…VYKD, LVLF…VIDD, MIVF…VIDD, and TILI…LWCH. Disordered regions lie at residues 361-472 and 508-539; these read RAPL…SAAE and PASS…GVHT. Residues 363 to 376 are compositionally biased toward low complexity; the sequence is PLSPSLNSRPSPIS. A phosphoserine mark is found at Ser365 and Ser373. Thr378 bears the Phosphothreonine mark. 2 stretches are compositionally biased toward polar residues: residues 416-426 and 455-469; these read QRQTPSGSREG and SLDS…STPS. Ser552 is subject to Phosphoserine. Positions 570–596 are enriched in low complexity; it reads GPSASAALSPPLGSSPGSPGSQSLSSG. Positions 570-635 are disordered; it reads GPSASAALSP…PQSLNVGKPL (66 aa).

As to quaternary structure, component of some SCF complex, composed of CUL1, SKP1, RBX1 and FBXO42. Interacts (via the kelch domain) with p53/TP53; interaction is direct.

In terms of biological role, substrate-recognition component of some SCF (SKP1-CUL1-F-box protein)-type E3 ubiquitin ligase complex. Specifically recognizes p53/TP53, promoting its ubiquitination and degradation. This is F-box only protein 42 (FBXO42) from Pongo abelii (Sumatran orangutan).